The sequence spans 322 residues: tRNA-modifying protein YgfZ (322 aa).

Residue Trp-182 participates in folate binding.

The protein belongs to the tRNA-modifying YgfZ family.

Its subcellular location is the cytoplasm. Its function is as follows. Folate-binding protein involved in regulating the level of ATP-DnaA and in the modification of some tRNAs. It is probably a key factor in regulatory networks that act via tRNA modification, such as initiation of chromosomal replication. In Vibrio parahaemolyticus serotype O3:K6 (strain RIMD 2210633), this protein is tRNA-modifying protein YgfZ.